A 340-amino-acid chain; its full sequence is Methane monooxygenase component C (340 aa).

The 2Fe-2S ferredoxin-type domain occupies 1 to 92; that stretch reads MYQIVIETED…DLHLLVPYTY (92 aa). [2Fe-2S] cluster is bound by residues Cys37, Cys41, Cys44, and Cys76. The FAD-binding FR-type domain maps to 101-205; sequence QTNWLAEILA…RGPAGSFFLH (105 aa). 215-229 serves as a coordination point for FAD; sequence VAGGTGLSPVLSMIR.

As to quaternary structure, the soluble methane monooxygenase (sMMO) consists of four components A/MMOH (composed of alpha/MmoX, beta/MmoY and gamma/MmoZ), B/MMOB (MmoB), C/MMOR (MmoC) and D/MMOD (MmoD). Requires [2Fe-2S] cluster as cofactor.

It carries out the reaction methane + NADH + O2 + H(+) = methanol + NAD(+) + H2O. The enzyme catalyses methane + NADPH + O2 + H(+) = methanol + NADP(+) + H2O. Its function is as follows. Responsible for the initial oxygenation of methane to methanol in methanotrophs. It also catalyzes the monohydroxylation of a variety of unactivated alkenes, alicyclic, aromatic and heterocyclic compounds. The component C is the iron-sulfur flavoprotein of sMMO. In Methylosinus trichosporium, this protein is Methane monooxygenase component C (mmoC).